The chain runs to 695 residues: MAEQPALQADRVPPEVRARVEELRRLIQRYNYEYYVLNAPTVSDAEYDALMLELRRWEEQYPELVTPDSPTQRVGAPPAEGFATVQHEIPMLSLGNVFSDGEIRAWAERVYRLSGRQDVEFVTEPKVDGLAVSLLYRDGVLVRGATRGDGYTGEDVTNNVRTIRMIPLRLYPPEGVIVPPVLEVRGEVYMNVRDFERLNRERGEQGLPLFANPRNAAAGSLRQLDPSVTASRPLRFAAWDIGLWEGTEPPATHLATLEFLRQLQIPVVPDYRLCRSVDEVIAECHRWQERRDALEFEADGVVIKVNDRALYQALGVVGREPRGATAYKFPAHEKTTIVRDVIWSVGRTGKLTPVAVLEPVEIGGVIVERATLHNEEEIRRLGLLIGDAVVVQRRGDVIPKVVATIPQRRDGDERPVDIPRQCPVCGAHTIRLEGEVDRYCPNPNCPARLKASVRHFASRNAMDIEGLGEKISDLFVDLGIIRSLPDLYEIDWARVLQLEGFGPKKVENLRKAIEASKNRPFARFLFALGIRHVGERNAQLLADHFRSIDRLMEATIDELLQIPGFGPAVAQSVFEFFREPKNREMIERFRRLGVRMAEEEAAAVATVQGPLAGKTVVLTGRLETLTRSQAEELLRRAGAHVTDSVSRKTDYVFAGADPGSKYVRAQQLGVPILGEEDLLRMLRESGIEVEAAARS.

Residues 44–48, 93–94, and glutamate 124 each bind NAD(+); these read DAEYD and SL. The active-site N6-AMP-lysine intermediate is lysine 126. 4 residues coordinate NAD(+): arginine 147, glutamate 187, lysine 304, and lysine 328. Positions 422, 425, 440, and 445 each coordinate Zn(2+). The region spanning 606 to 695 is the BRCT domain; it reads TVQGPLAGKT…GIEVEAAARS (90 aa).

This sequence belongs to the NAD-dependent DNA ligase family. LigA subfamily. Requires Mg(2+) as cofactor. It depends on Mn(2+) as a cofactor.

It carries out the reaction NAD(+) + (deoxyribonucleotide)n-3'-hydroxyl + 5'-phospho-(deoxyribonucleotide)m = (deoxyribonucleotide)n+m + AMP + beta-nicotinamide D-nucleotide.. In terms of biological role, DNA ligase that catalyzes the formation of phosphodiester linkages between 5'-phosphoryl and 3'-hydroxyl groups in double-stranded DNA using NAD as a coenzyme and as the energy source for the reaction. It is essential for DNA replication and repair of damaged DNA. This chain is DNA ligase, found in Thermomicrobium roseum (strain ATCC 27502 / DSM 5159 / P-2).